The following is a 262-amino-acid chain: Acyl-[acyl-carrier-protein]--UDP-N-acetylglucosamine O-acyltransferase (262 aa).

Belongs to the transferase hexapeptide repeat family. LpxA subfamily. Homotrimer.

It is found in the cytoplasm. It catalyses the reaction a (3R)-hydroxyacyl-[ACP] + UDP-N-acetyl-alpha-D-glucosamine = a UDP-3-O-[(3R)-3-hydroxyacyl]-N-acetyl-alpha-D-glucosamine + holo-[ACP]. It functions in the pathway glycolipid biosynthesis; lipid IV(A) biosynthesis; lipid IV(A) from (3R)-3-hydroxytetradecanoyl-[acyl-carrier-protein] and UDP-N-acetyl-alpha-D-glucosamine: step 1/6. Functionally, involved in the biosynthesis of lipid A, a phosphorylated glycolipid that anchors the lipopolysaccharide to the outer membrane of the cell. The polypeptide is Acyl-[acyl-carrier-protein]--UDP-N-acetylglucosamine O-acyltransferase (Psychromonas ingrahamii (strain DSM 17664 / CCUG 51855 / 37)).